The following is a 601-amino-acid chain: MNEAEHSVEHPPVQGSHVEGGVVEHPDAKDFGSAAALPADPTWFKHAVFYEVLVRAFFDASADGSGDLRGLIDRLDYLQWLGIDCIWLPPFYDSPLRDGGYDIRDFYKVLPEFGTVDDFVALVDAAHRRGIRIITDLVMNHTSESHPWFQESRRDPDGPYGDYYVWSDTSERYTDARIIFVDTEESNWSFDPVRRQFYWHRFFSHQPDLNYDNPAVQEAMIDVIRFWLGLGIDGFRLDAVPYLFEREGTNCENLPETHAFLKRVRKVVDDEFPGRVLLAEANQWPGDVVEYFGDPNTGGDECHMAFHFPLMPRIFMAVRRESRFPISEIIAQTPPIPDMAQWGIFLRNHDELTLEMVTDEERDYMYAEYAKDPRMKANVGIRRRLAPLLDNDRNQIELFTALLLSLPGSPVLYYGDEIGMGDVIWLGDRDGVRIPMQWTPDRNAGFSTANPGRLYLPPSQDPVYGYQAVNVEAQRDTSTSLLNFTRTMLAVRRRHPAFAVGAFQELGGSNPSVLAYVRQVAGDDGDTVLCVNNLSRFPQPIELDLQQWTNYTPVELTGHVEFPRIGQVPYLLTLPGHGFYWFQLTTHEVGAPPTCGGERRL.

Residues 1–21 (MNEAEHSVEHPPVQGSHVEGG) are disordered. Asp-98 serves as a coordination point for substrate. Residue Asn-140 participates in Ca(2+) binding. Positions 141 and 206 each coordinate substrate. Asp-208 contacts Ca(2+). A substrate-binding site is contributed by Arg-236. Asp-238 serves as the catalytic Nucleophile. Ca(2+) is bound by residues Tyr-242, Leu-243, and Glu-245. Glu-280 serves as the catalytic Proton donor. Residues His-349 and Asp-350 each coordinate substrate.

Belongs to the glycosyl hydrolase 13 family. TreS subfamily. Homohexamer.

The enzyme catalyses D-maltose = alpha,alpha-trehalose. It catalyses the reaction Endohydrolysis of (1-&gt;4)-alpha-D-glucosidic linkages in polysaccharides containing three or more (1-&gt;4)-alpha-linked D-glucose units.. It functions in the pathway glycan biosynthesis; glycogen biosynthesis. It participates in capsule biogenesis; capsule polysaccharide biosynthesis. Catalyzes the reversible interconversion of maltose and trehalose by transglucosylation. Also displays amylase activity, catalyzing the endohydrolysis of (1-&gt;4)-alpha-D-glucosidic linkages in glycogen and maltooligosaccharides such as maltoheptaose, to produce maltose which then can be converted to trehalose. TreS plays a key role in the utilization of trehalose for the production of glycogen and alpha-glucan via the TreS-Pep2 branch involved in the biosynthesis of maltose-1-phosphate (M1P). Might also function as a sensor and/or regulator of trehalose levels within the cell. Thus, when trehalose levels in the cell become dangerously low, TreS could expedite the conversion of glycogen to maltose via its amylase activity and then convert the maltose to trehalose; but this enzyme also could expedite or promote the conversion of trehalose to glycogen when cytoplasmic trehalose levels become too high. The polypeptide is Trehalose synthase/amylase TreS (Mycobacterium tuberculosis (strain CDC 1551 / Oshkosh)).